Here is a 451-residue protein sequence, read N- to C-terminus: MREIVHLQTGQCGNQIGTKFWEIISDEHGIQPTGEYTGADKDLMELQLERINVYYNEGNQGKYVPRAVLVDLEPGTMDSVRAGPHGQLFKPDSFVFGQSGAGNNWAKGHYTEGAELVDSVLDVVRKEAEKCDCLQGFQLTHSLGGGTGSGMGTLLVSKIREEFPDRIMNTFSVVPSPKVSDTVVEPYNATLSIHQLVENTDETYCIDNEALYDICFRTLKLQNPTYGDLNHLVSLTMSGVTTCFRFPGQLNADLRKLAVNMVPFPRLHFFMPGFAPLTARGSQQYRALTVPELTQQMFDAKNMMAACDPRHGRYLTVAAIFRGRMSMKEVDEQMYNIQNKNSSFFVEWIPNNVKTAVCDIPPRGIKMASTFIGNSTAIHELFKRVGEQFTAMFRRKAFLHWYTGEGMDEMEFTEAESNMNDLVSEYQQYQEATADDEAEFEEEGEVEGEYA.

GTP-binding residues include Q11, E73, S142, G146, T147, G148, N208, and N230. E73 lines the Mg(2+) pocket. A disordered region spans residues Q430 to A451. The segment covering T433 to A451 has biased composition (acidic residues).

This sequence belongs to the tubulin family. Dimer of alpha and beta chains. A typical microtubule is a hollow water-filled tube with an outer diameter of 25 nm and an inner diameter of 15 nM. Alpha-beta heterodimers associate head-to-tail to form protofilaments running lengthwise along the microtubule wall with the beta-tubulin subunit facing the microtubule plus end conferring a structural polarity. Microtubules usually have 13 protofilaments but different protofilament numbers can be found in some organisms and specialized cells. Mg(2+) is required as a cofactor.

It is found in the cytoplasm. Its subcellular location is the cytoskeleton. Functionally, tubulin is the major constituent of microtubules, a cylinder consisting of laterally associated linear protofilaments composed of alpha- and beta-tubulin heterodimers. Microtubules grow by the addition of GTP-tubulin dimers to the microtubule end, where a stabilizing cap forms. Below the cap, tubulin dimers are in GDP-bound state, owing to GTPase activity of alpha-tubulin. The polypeptide is Tubulin beta-1 chain (Homarus americanus (American lobster)).